Consider the following 780-residue polypeptide: Catenin beta-1 (780 aa).

The disordered stretch occupies residues 34 to 56 (GIHSGATTTAPSLSGKGNPEDDD). 10 ARM repeats span residues 140–179 (NYQD…QLSK), 224–263 (REGL…NLLL), 266–305 (EGAK…ILAY), 350–389 (SSNK…NLSD), 399–430 (GLLG…TCNN), 431–472 (YKNK…HLTS), 478–518 (EMAQ…NLAL), 520–561 (PANH…QFVE), 583–622 (IHNR…ELAQ), and 624–663 (KEAA…RMSE). Positions 735–744 (EHEMAGHHPG) are enriched in basic and acidic residues. The disordered stretch occupies residues 735-770 (EHEMAGHHPGPDYPVDGLPDLGHTQDLIDGLPPGDS).

It belongs to the beta-catenin family. Interacts with adnpa. Interacts with cdh1 during oogenesis and in the unfertilized egg. Interacts with ctnna1 and cdh2. In terms of processing, phosphorylation by gsk3b promotes ubiquitination and subsequent degradation by the proteasome. Ubiquitinated when phosphorylated by gsk3b, leading to its degradation. As to expression, expressed in the successional lamina, also expressed in both the epithelial and mesenchymal cells of the developing replacement tooth (at protein level). Expressed in the enamel organ as well as in the inner and outer dental epithelium during replacement tooth morphogenesis (at protein level). Expressed in the differentiated, polarized odontoblasts that line the dentine matrix as well as in the inner and outer dental epithelium during tooth cytodifferentiation (at protein level). Expressed in the reduced enamel organ, odontoblasts and weakly at the center of the dental papilla of the functional tooth as well as in the epithelial crypts surrounding the functional tooth (at protein level). Expressed in the liver (at protein level). Expressed at intercalated disks in the heart (at protein level). Expressed in the ovary.

The protein localises to the cytoplasm. Its subcellular location is the nucleus. The protein resides in the cell membrane. It localises to the cell junction. It is found in the adherens junction. Functionally, key downstream component of the canonical Wnt signaling pathway. In the absence of Wnt, forms a complex with axin1, axin2, apc, csnk1a1 and gsk3b that promotes phosphorylation on N-terminal Ser and Thr residues and ubiquitination of ctnnb1 and its subsequent degradation by the proteasome. In the presence of Wnt ligand, ctnnb1 is not ubiquitinated and accumulates in the nucleus, where it acts as a coactivator for transcription factors of the TCF/LEF family, leading to activate Wnt responsive genes. Plays a key role in dorsoventral patterning: in prospective ventral blastomeres, its down-regulation by axin1 and axin2 leads to inhibit the Wnt signaling pathway, while in prospective dorsal blastomeres, degradation of axin results in stabilization and nuclear translocation of ctnnb1. This Danio rerio (Zebrafish) protein is Catenin beta-1.